Here is a 261-residue protein sequence, read N- to C-terminus: Putative quercetin 2,3-dioxygenase Ta0133 (261 aa).

Residues H17, H19, H61, and E63 each coordinate a divalent metal cation.

It belongs to the pirin family. The cofactor is a divalent metal cation.

The catalysed reaction is quercetin + O2 = 2-(3,4-dihydroxybenzoyloxy)-4,6-dihydroxybenzoate + CO. The protein operates within flavonoid metabolism; quercetin degradation. Its function is as follows. Putative quercetin 2,3-dioxygenase. The sequence is that of Putative quercetin 2,3-dioxygenase Ta0133 from Thermoplasma acidophilum (strain ATCC 25905 / DSM 1728 / JCM 9062 / NBRC 15155 / AMRC-C165).